The sequence spans 523 residues: Tyrosine/DOPA decarboxylase 5 (523 aa).

A compositionally biased stretch (polar residues) spans 1-19 (MGSLPTDNLESMSICSQNP). Disordered stretches follow at residues 1-20 (MGSL…QNPL) and 47-66 (SRSQ…APNH). Position 321 is an N6-(pyridoxal phosphate)lysine (lysine 321).

Belongs to the group II decarboxylase family. Homodimer. Pyridoxal 5'-phosphate is required as a cofactor. In terms of tissue distribution, roots.

It carries out the reaction L-tyrosine + H(+) = tyramine + CO2. It catalyses the reaction L-dopa + H(+) = dopamine + CO2. The enzyme catalyses 5-hydroxy-L-tryptophan + H(+) = serotonin + CO2. Functionally, may play an important role in providing precursors for alkaloid synthesis in the roots and germinating seedlings. The sequence is that of Tyrosine/DOPA decarboxylase 5 (TYDC5) from Papaver somniferum (Opium poppy).